The following is a 70-amino-acid chain: NAD(P)H-quinone oxidoreductase subunit O (70 aa).

The protein belongs to the complex I NdhO subunit family. In terms of assembly, NDH-1 can be composed of about 15 different subunits; different subcomplexes with different compositions have been identified which probably have different functions.

Its subcellular location is the cellular thylakoid membrane. It catalyses the reaction a plastoquinone + NADH + (n+1) H(+)(in) = a plastoquinol + NAD(+) + n H(+)(out). The catalysed reaction is a plastoquinone + NADPH + (n+1) H(+)(in) = a plastoquinol + NADP(+) + n H(+)(out). NDH-1 shuttles electrons from an unknown electron donor, via FMN and iron-sulfur (Fe-S) centers, to quinones in the respiratory and/or the photosynthetic chain. The immediate electron acceptor for the enzyme in this species is believed to be plastoquinone. Couples the redox reaction to proton translocation, and thus conserves the redox energy in a proton gradient. Cyanobacterial NDH-1 also plays a role in inorganic carbon-concentration. This chain is NAD(P)H-quinone oxidoreductase subunit O, found in Nostoc sp. (strain PCC 7120 / SAG 25.82 / UTEX 2576).